The following is a 2217-amino-acid chain: DNA polymerase epsilon catalytic subunit A (2217 aa).

4 residues coordinate Zn(2+): Cys2104, Cys2107, Cys2126, and Cys2129. The segment at Cys2104–Cys2129 adopts a CysA-type zinc-finger fold. [4Fe-4S] cluster is bound by residues Cys2160, Cys2163, Cys2175, and Cys2177. The CysB motif signature appears at Cys2160 to Cys2177.

It belongs to the DNA polymerase type-B family. In terms of assembly, heterotetramer. Consists of 4 subunits: POL2, DPB2, DPB3 and DPB4. The cofactor is [4Fe-4S] cluster.

It is found in the nucleus. The enzyme catalyses DNA(n) + a 2'-deoxyribonucleoside 5'-triphosphate = DNA(n+1) + diphosphate. Functionally, DNA polymerase II participates in chromosomal DNA replication. The polypeptide is DNA polymerase epsilon catalytic subunit A (POL2) (Candida glabrata (strain ATCC 2001 / BCRC 20586 / JCM 3761 / NBRC 0622 / NRRL Y-65 / CBS 138) (Yeast)).